The sequence spans 486 residues: Mogroside I-E synthase (486 aa).

S302, C360, Q362, W380, N381, S382, E385, D401, and Q402 together coordinate UDP-alpha-D-glucose.

It belongs to the UDP-glycosyltransferase family. As to expression, highly expressed in young fruits 15 days after anthesis (15-DAA).

The enzyme catalyses mogrol + UDP-alpha-D-glucose = mogroside IE + UDP + H(+). The catalysed reaction is mogroside I-A1 + UDP-alpha-D-glucose = mogroside IIE + UDP + H(+). It catalyses the reaction mogroside II-A1 + UDP-alpha-D-glucose = mogroside IIIX + UDP + H(+). It carries out the reaction mogroside II-A + UDP-alpha-D-glucose = mogroside III + UDP + H(+). It functions in the pathway secondary metabolite biosynthesis; terpenoid biosynthesis. UDP-glycosyltransferase involved in the biosynthesis of cucurbitacin and mogroside tetracyclic triterpene natural products (e.g. siamenoside I and mogrosides IV, V and VI). Cucurbitacins have cytotoxic properties and exhibit deterrent taste as a defense barrier against herbivores. Mogrosides are nonsugar highly oxygenated compounds used as high-intensity zero-calorie sweeteners; they also possess pharmacological properties such as regulating immunity, lowering blood sugar and lipid levels, protecting the liver, and acting as antioxidants and antitumor agents. Catalyzes the C3 primary glucosylation of mogrol, mogroside I-A1, mogroside II-A1 and mogroside II-A. This chain is Mogroside I-E synthase, found in Siraitia grosvenorii (Monk's fruit).